Reading from the N-terminus, the 370-residue chain is Putative agmatine deiminase (370 aa).

Catalysis depends on Cys-361, which acts as the Amidino-cysteine intermediate.

This sequence belongs to the agmatine deiminase family.

The enzyme catalyses agmatine + H2O = N-carbamoylputrescine + NH4(+). The protein is Putative agmatine deiminase of Shewanella baltica (strain OS185).